The chain runs to 657 residues: Protein kinase and PP2C-like domain-containing protein (657 aa).

Positions 32-327 (FSLLSPIAKG…LKIIEKHIAV (296 aa)) constitute a Protein kinase domain. ATP-binding positions include 38–46 (IAKGSESTV) and lysine 59. Aspartate 156 functions as the Proton acceptor; for kinase activity in the catalytic mechanism. One can recognise a PPM-type phosphatase domain in the interval 390–647 (SWGSFATCGR…DNITVIVVFL (258 aa)). The Mn(2+) site is built by aspartate 426, glycine 427, aspartate 598, and aspartate 638.

In the N-terminal section; belongs to the protein kinase superfamily. Ser/Thr protein kinase family. It in the C-terminal section; belongs to the PP2C family. Requires Mg(2+) as cofactor. It depends on Mn(2+) as a cofactor.

It catalyses the reaction L-seryl-[protein] + ATP = O-phospho-L-seryl-[protein] + ADP + H(+). The enzyme catalyses L-threonyl-[protein] + ATP = O-phospho-L-threonyl-[protein] + ADP + H(+). The catalysed reaction is O-phospho-L-seryl-[protein] + H2O = L-seryl-[protein] + phosphate. It carries out the reaction O-phospho-L-threonyl-[protein] + H2O = L-threonyl-[protein] + phosphate. This is Protein kinase and PP2C-like domain-containing protein from Oryza sativa subsp. japonica (Rice).